The chain runs to 32 residues: Variegin (32 aa).

Positions 1-32 (SDQGDVAEPKMHKTAPPFDFEAIPEEYLDDES) are disordered. The contains the active site stretch occupies residues 8-14 (EPKMHKT). O-linked (Hex) threonine glycosylation is present at threonine 14. Over residues 22 to 32 (AIPEEYLDDES) the composition is skewed to acidic residues.

Interacts with human F2 (thrombin); the interaction results in thrombin inhibition.

It localises to the secreted. Thrombin inhibitor. Does not inhibit other serine proteases. The protein is Variegin of Amblyomma variegatum (Tropical bont tick).